The following is a 1124-amino-acid chain: SH3 and PX domain-containing protein 2A (1124 aa).

Positions 4–128 constitute a PX domain; sequence YCVQDATVVD…RFFEARPEDV (125 aa). The 60-residue stretch at 166–225 folds into the SH3 1 domain; it reads MILEQYVVVSNYKKQENSELSLQAGEVVDVIEKNESGWWFVSTSEEQGWVPATYLEAQNG. At Thr256 the chain carries Phosphothreonine. One can recognise an SH3 2 domain in the interval 266-325; the sequence is SREEKYVTVQPYTSQSKDEIGFEKGVTVEVIRKNLEGWWYIRYLGKEGWAPASYLKKAKD. Residues Ser405 and Ser420 each carry the phosphoserine modification. 4 disordered regions span residues 414-443, 504-672, 692-830, and 886-952; these read QRAQ…PKPP, RKKP…KLKA, SVTI…PKKE, and YLVA…GKTS. One can recognise an SH3 3 domain in the interval 447–506; sequence SVEVEYYTIAEFQSCISDGISFRGGQKAEVIDKNSGGWWYVQIGEKEGWAPASYIDKRKK. Ser546 and Ser566 each carry phosphoserine. Over residues 575-585 the composition is skewed to basic and acidic residues; that stretch reads SGDRGSGDKHP. A Phosphoserine modification is found at Ser592. Residues 607–619 are compositionally biased toward acidic residues; it reads SSEDVALEEETIY. Low complexity-rich tracts occupy residues 633–669 and 692–709; these read SARG…SLLK and SVTI…SSLS. Phosphoserine is present on Ser643. A compositionally biased stretch (basic and acidic residues) spans 713-739; it reads GDLKPRSASDAGIRDTPKVGTKKDPDV. Thr728 is modified (phosphothreonine). A phosphoserine mark is found at Ser764, Ser766, and Ser812. Thr822 bears the Phosphothreonine mark. The SH3 4 domain occupies 833-892; sequence GQGATYVTCSAYQKVQDSEISFPEGAEVHVLEKAESGWWYVRFGELEGWAPSHYLVAEEN. The stretch at 907–937 forms a coiled coil; sequence SSQNEGKSDSLEKIEKRVQALNTVNQSKRAT. Basic and acidic residues predominate over residues 912-924; that stretch reads GKSDSLEKIEKRV. Residues 926 to 935 show a composition bias toward polar residues; sequence ALNTVNQSKR. A phosphoserine mark is found at Ser993, Ser1007, Ser1008, and Ser1029. The tract at residues 1020–1050 is disordered; sequence KGRLAERAASQGSESPLLPTQRKGIPVSPVR. An SH3 5 domain is found at 1063–1124; the sequence is NLKDVYISIA…VPSNYLEKKN (62 aa).

Belongs to the SH3PXD2 family. In terms of assembly, interacts with ADAM12, ADAM15 and ADAM19. Interacts with NOXO1. Interacts (via SH3 domains) with NOXA1; the interaction is direct. Interacts (via N-terminus) with CYBA. Interacts with FASLG. Interacts (via PX domain) with RAB40B (GTP-bound); interaction promotes invadopodia-mediated extracellular matrix degradation. Tyrosine phosphorylated by SRC. Phosphorylation plays a regulatory role in the protein localization. The intramolecular interaction of the PX domain with the third SH3 domain maintains the protein in the cytoplasm and phosphorylation disrupts this interaction, resulting in the redistribution of the protein from cytoplasm to the perimembrane region. Phosphorylated on serine upon DNA damage, probably by ATM or ATR. As to expression, widely expressed. Not found in the spleen and testis.

The protein localises to the cytoplasm. It localises to the cell projection. Its subcellular location is the podosome. Adapter protein involved in invadopodia and podosome formation, extracellular matrix degradation and invasiveness of some cancer cells. Binds matrix metalloproteinases (ADAMs), NADPH oxidases (NOXs) and phosphoinositides. Acts as an organizer protein that allows NOX1- or NOX3-dependent reactive oxygen species (ROS) generation and ROS localization. In association with ADAM12, mediates the neurotoxic effect of amyloid-beta peptide. The polypeptide is SH3 and PX domain-containing protein 2A (Mus musculus (Mouse)).